A 672-amino-acid polypeptide reads, in one-letter code: UvrABC system protein B (672 aa).

One can recognise a Helicase ATP-binding domain in the interval 26–181 (AGLEDGLAYQ…ILQRLAELQY (156 aa)). 39-46 (GVTGSGKT) contacts ATP. The Beta-hairpin motif lies at 92 to 115 (YYDYYQPEAYVPSSDTYIEKDASI). The region spanning 430–592 (QVDDLLSEIK…ITPKSIQKAV (163 aa)) is the Helicase C-terminal domain. The UVR domain occupies 631 to 666 (AKELRKLEEQMYHHARNLEFEEAAAVRDKIQHIRKG).

Belongs to the UvrB family. Forms a heterotetramer with UvrA during the search for lesions. Interacts with UvrC in an incision complex.

It localises to the cytoplasm. Functionally, the UvrABC repair system catalyzes the recognition and processing of DNA lesions. A damage recognition complex composed of 2 UvrA and 2 UvrB subunits scans DNA for abnormalities. Upon binding of the UvrA(2)B(2) complex to a putative damaged site, the DNA wraps around one UvrB monomer. DNA wrap is dependent on ATP binding by UvrB and probably causes local melting of the DNA helix, facilitating insertion of UvrB beta-hairpin between the DNA strands. Then UvrB probes one DNA strand for the presence of a lesion. If a lesion is found the UvrA subunits dissociate and the UvrB-DNA preincision complex is formed. This complex is subsequently bound by UvrC and the second UvrB is released. If no lesion is found, the DNA wraps around the other UvrB subunit that will check the other stand for damage. The chain is UvrABC system protein B from Coxiella burnetii (strain CbuG_Q212) (Coxiella burnetii (strain Q212)).